The sequence spans 96 residues: Citrate lyase acyl carrier protein (96 aa).

Serine 14 is subject to O-(phosphoribosyl dephospho-coenzyme A)serine.

It belongs to the CitD family. In terms of assembly, oligomer with a subunit composition of (alpha,beta,gamma)6.

It localises to the cytoplasm. Its function is as follows. Covalent carrier of the coenzyme of citrate lyase. This chain is Citrate lyase acyl carrier protein, found in Lactococcus lactis subsp. lactis (strain IL1403) (Streptococcus lactis).